Consider the following 334-residue polypeptide: Fructose-1,6-bisphosphatase class 1 (334 aa).

Residues Glu87, Asp106, Leu108, and Asp109 each contribute to the Mg(2+) site. Residues 109–112, Asn208, and Lys274 each bind substrate; that span reads DGSS. Glu280 lines the Mg(2+) pocket.

The protein belongs to the FBPase class 1 family. In terms of assembly, homotetramer. The cofactor is Mg(2+).

It localises to the cytoplasm. The enzyme catalyses beta-D-fructose 1,6-bisphosphate + H2O = beta-D-fructose 6-phosphate + phosphate. Its pathway is carbohydrate biosynthesis; gluconeogenesis. This chain is Fructose-1,6-bisphosphatase class 1, found in Psychrobacter sp. (strain PRwf-1).